We begin with the raw amino-acid sequence, 167 residues long: Protein-export protein SecB (167 aa).

The interval 1–20 (MASNDDAPVGAANGNGNTGA) is disordered.

It belongs to the SecB family. As to quaternary structure, homotetramer, a dimer of dimers. One homotetramer interacts with 1 SecA dimer.

It localises to the cytoplasm. Its function is as follows. One of the proteins required for the normal export of preproteins out of the cell cytoplasm. It is a molecular chaperone that binds to a subset of precursor proteins, maintaining them in a translocation-competent state. It also specifically binds to its receptor SecA. In Mesorhizobium japonicum (strain LMG 29417 / CECT 9101 / MAFF 303099) (Mesorhizobium loti (strain MAFF 303099)), this protein is Protein-export protein SecB.